Consider the following 104-residue polypeptide: Flagellar hook-basal body complex protein FliE (104 aa).

It belongs to the FliE family.

Its subcellular location is the bacterial flagellum basal body. This chain is Flagellar hook-basal body complex protein FliE, found in Enterobacter sp. (strain 638).